A 456-amino-acid polypeptide reads, in one-letter code: Equilibrative nucleoside transporter 2 (456 aa).

A helical transmembrane segment spans residues 13-33 (LVGISFFILGLGTLLPWNFFI). 2 N-linked (GlcNAc...) asparagine glycosylation sites follow: Asn-48 and Asn-57. Transmembrane regions (helical) follow at residues 70-90 (WVTLLSQLPLLLFTLLNSFLY), 99-119 (ILGSLLAILLLFALTAALVKV), 124-144 (GPFFSITMASVCFINSFSAVL), 162-182 (LFLSGQGLAGIFAALAMLLSM), and 193-213 (LGYFITPCVGILMSIVCYLSL). Asn-225 carries N-linked (GlcNAc...) asparagine glycosylation. The residue at position 252 (Ser-252) is a Phosphoserine. 5 helical membrane-spanning segments follow: residues 291-311 (WLTALCLVLVFTVTLSVFPAI), 324-344 (WSQFFNPICCFLLFNIMDWLG), 360-380 (LLPLLVCLRFLFVPLFMLCHV), 386-406 (LPILFPQDAYFITFMLLFAVS), and 432-452 (ALMTFFLALGLSCGASLSFLF).

This sequence belongs to the SLC29A/ENT transporter (TC 2.A.57) family. In terms of processing, glycosylated. In terms of tissue distribution, highly expressed in skeletal muscle. Expressed in liver, lung, placenta, brain, heart, kidney and ovarian tissues. Expressed in testis at the blood-brain-barrier.

It is found in the apical cell membrane. The protein resides in the basolateral cell membrane. It carries out the reaction inosine(in) = inosine(out). The enzyme catalyses adenosine(in) = adenosine(out). It catalyses the reaction uridine(out) = uridine(in). The catalysed reaction is thymidine(in) = thymidine(out). It carries out the reaction hypoxanthine(out) = hypoxanthine(in). The enzyme catalyses adenine(out) = adenine(in). It catalyses the reaction cytidine(in) = cytidine(out). The catalysed reaction is thymine(out) = thymine(in). It carries out the reaction uracil(in) = uracil(out). The enzyme catalyses guanine(out) = guanine(in). It catalyses the reaction guanosine(in) = guanosine(out). Its function is as follows. Bidirectional uniporter involved in the facilitative transport of nucleosides and nucleobases, and contributes to maintaining their cellular homeostasis. Functions as a Na(+)-independent, passive transporter. Involved in the transport of nucleosides such as inosine, adenosine, uridine, thymidine, cytidine and guanosine. Also able to transport purine nucleobases (hypoxanthine, adenine, guanine) and pyrimidine nucleobases (thymine, uracil). Involved in nucleoside transport at basolateral membrane of kidney cells, allowing liver absorption of nucleoside metabolites. Mediates apical nucleoside uptake into Sertoli cells, thereby regulating the transport of nucleosides in testis across the blood-testis-barrier. Mediates both the influx and efflux of hypoxanthine in skeletal muscle microvascular endothelial cells to control the amount of intracellular hypoxanthine available for xanthine oxidase-mediated ROS production. Functionally, non functional nucleoside transporter protein for adenosine or thymidine transport. Does not express on cell membrane. The sequence is that of Equilibrative nucleoside transporter 2 from Homo sapiens (Human).